A 180-amino-acid polypeptide reads, in one-letter code: Oligoribonuclease (180 aa).

Positions 7-170 (LIWIDLEMTG…DDIRESLAEL (164 aa)) constitute an Exonuclease domain. Tyrosine 128 is a catalytic residue.

Belongs to the oligoribonuclease family.

It localises to the cytoplasm. Its function is as follows. 3'-to-5' exoribonuclease specific for small oligoribonucleotides. The chain is Oligoribonuclease from Pectobacterium atrosepticum (strain SCRI 1043 / ATCC BAA-672) (Erwinia carotovora subsp. atroseptica).